The sequence spans 78 residues: Toxin-like protein 10 (78 aa).

The signal sequence occupies residues 1–23 (MKATALLIAVFILFSVFGDMGYC).

Post-translationally, contains 4 disulfide bonds. Expressed by the venom gland.

The protein localises to the secreted. The chain is Toxin-like protein 10 from Urodacus yaschenkoi (Inland robust scorpion).